The sequence spans 758 residues: Glucan endo-1,3-beta-D-glucosidase (758 aa).

The segment at residues 1–34 (MSHASRRRWRRATTSAATAALLCGALLTFPSAPA) is a signal peptide (tat-type signal). The beta-sandwich subdomain stretch occupies residues 38–251 (VRLGSGSYTT…SGYASVALLP (214 aa)). A GH81 domain is found at 38–704 (VRLGSGSYTT…QWLSTLAEFG (667 aa)). Residues 252 to 342 (SPDDFDRYAP…EGDRFTTELT (91 aa)) are alpha/beta subdomain. The (alpha/beta)6 barrel subdomain stretch occupies residues 352–704 (TVDSADHQRL…QWLSTLAEFG (353 aa)). Residues tyrosine 382, lysine 386, aspartate 457, histidine 461, asparagine 532, glutamate 534, and glutamate 538 each coordinate (1,3-beta-D-glucosyl)n. Aspartate 457 is a catalytic residue. Catalysis depends on residues glutamate 534 and glutamate 538.

It belongs to the glycosyl hydrolase 81 family. Post-translationally, predicted to be exported by the Tat system. The position of the signal peptide cleavage has not been experimentally proven.

It is found in the secreted. It catalyses the reaction Hydrolysis of (1-&gt;3)-beta-D-glucosidic linkages in (1-&gt;3)-beta-D-glucans.. Cleaves internal linkages in 1,3-beta-glucan. May contribute to biomass degradation by hydrolyzing the 1,3-beta-linked plant polymer callose that is present in decomposing plant tissue. This chain is Glucan endo-1,3-beta-D-glucosidase, found in Thermobifida fusca (strain YX).